We begin with the raw amino-acid sequence, 437 residues long: MHDIRVIRENPAAFDEGLAKRGLEPLSAELIALDDARKAAISAAQGAQERRNALSKEIGAAKKAKDEARAQDLMAEVARLKDEAPALEAAADAAAKALDARLAAIPNTPKAEVPLGRDEHDNVEYRRFEGRGRAEAGRQHFELGEATGLMDFEAAAKLSGARFVVLKGHLARLERALGQFMLDLHTTEHGYTEVAPPLLVRDEVMFGTAQLPKFRDDQFAAMPGSVEAEGGAPTRWLIPTAEVPLTNLVRESILSEDELPLRFTALTPCFRAEAGAAGRDTRGMLRQHQFTKVELVSVTTPEQSDEEHERMLASAEAVLKKLDLPYRVVTLCTGDMGFASQKTYDIEVWLPGQGTFREISSCSVCGDFQARRMDARFRRREGRGVAHVHTLNGSGVAVGRALIAVMENYQNPDGSVTVPSALVPYMGGITRIEGPHA.

240–242 (TAE) lines the L-serine pocket. 271-273 (RAE) contacts ATP. An L-serine-binding site is contributed by Glu-294. 358 to 361 (EISS) contacts ATP. Ser-394 is an L-serine binding site.

Belongs to the class-II aminoacyl-tRNA synthetase family. Type-1 seryl-tRNA synthetase subfamily. As to quaternary structure, homodimer. The tRNA molecule binds across the dimer.

It localises to the cytoplasm. The catalysed reaction is tRNA(Ser) + L-serine + ATP = L-seryl-tRNA(Ser) + AMP + diphosphate + H(+). It carries out the reaction tRNA(Sec) + L-serine + ATP = L-seryl-tRNA(Sec) + AMP + diphosphate + H(+). It participates in aminoacyl-tRNA biosynthesis; selenocysteinyl-tRNA(Sec) biosynthesis; L-seryl-tRNA(Sec) from L-serine and tRNA(Sec): step 1/1. Catalyzes the attachment of serine to tRNA(Ser). Is also able to aminoacylate tRNA(Sec) with serine, to form the misacylated tRNA L-seryl-tRNA(Sec), which will be further converted into selenocysteinyl-tRNA(Sec). This chain is Serine--tRNA ligase, found in Methylobacterium nodulans (strain LMG 21967 / CNCM I-2342 / ORS 2060).